The following is a 250-amino-acid chain: Probable dihydroorotate dehydrogenase B (NAD(+)), electron transfer subunit (250 aa).

Residues 1 to 89 (MNRITVDQVR…RGPYGNGFQI (89 aa)) form the FAD-binding FR-type domain. [2Fe-2S] cluster-binding residues include cysteine 200, cysteine 205, cysteine 208, and cysteine 216.

It belongs to the PyrK family. Heterotetramer of 2 PyrK and 2 PyrD type B subunits. The cofactor is [2Fe-2S] cluster. It depends on FAD as a cofactor.

The protein operates within pyrimidine metabolism; UMP biosynthesis via de novo pathway; orotate from (S)-dihydroorotate (NAD(+) route): step 1/1. Functionally, responsible for channeling the electrons from the oxidation of dihydroorotate from the FMN redox center in the PyrD type B subunit to the ultimate electron acceptor NAD(+). The polypeptide is Probable dihydroorotate dehydrogenase B (NAD(+)), electron transfer subunit (Thermoplasma acidophilum (strain ATCC 25905 / DSM 1728 / JCM 9062 / NBRC 15155 / AMRC-C165)).